Consider the following 94-residue polypeptide: Co-chaperonin GroES (94 aa).

The protein belongs to the GroES chaperonin family. As to quaternary structure, heptamer of 7 subunits arranged in a ring. Interacts with the chaperonin GroEL.

It localises to the cytoplasm. Together with the chaperonin GroEL, plays an essential role in assisting protein folding. The GroEL-GroES system forms a nano-cage that allows encapsulation of the non-native substrate proteins and provides a physical environment optimized to promote and accelerate protein folding. GroES binds to the apical surface of the GroEL ring, thereby capping the opening of the GroEL channel. The protein is Co-chaperonin GroES of Brevibacillus brevis (strain 47 / JCM 6285 / NBRC 100599).